We begin with the raw amino-acid sequence, 208 residues long: N-(5'-phosphoribosyl)anthranilate isomerase (208 aa).

This sequence belongs to the TrpF family.

The enzyme catalyses N-(5-phospho-beta-D-ribosyl)anthranilate = 1-(2-carboxyphenylamino)-1-deoxy-D-ribulose 5-phosphate. It participates in amino-acid biosynthesis; L-tryptophan biosynthesis; L-tryptophan from chorismate: step 3/5. The polypeptide is N-(5'-phosphoribosyl)anthranilate isomerase (Neisseria meningitidis serogroup B (strain ATCC BAA-335 / MC58)).